The following is a 176-amino-acid chain: NAD(P)H-quinone oxidoreductase subunit J (176 aa).

Belongs to the complex I 30 kDa subunit family. As to quaternary structure, NDH-1 can be composed of about 15 different subunits; different subcomplexes with different compositions have been identified which probably have different functions.

It is found in the cellular thylakoid membrane. The enzyme catalyses a plastoquinone + NADH + (n+1) H(+)(in) = a plastoquinol + NAD(+) + n H(+)(out). It catalyses the reaction a plastoquinone + NADPH + (n+1) H(+)(in) = a plastoquinol + NADP(+) + n H(+)(out). Functionally, NDH-1 shuttles electrons from an unknown electron donor, via FMN and iron-sulfur (Fe-S) centers, to quinones in the respiratory and/or the photosynthetic chain. The immediate electron acceptor for the enzyme in this species is believed to be plastoquinone. Couples the redox reaction to proton translocation, and thus conserves the redox energy in a proton gradient. Cyanobacterial NDH-1 also plays a role in inorganic carbon-concentration. In Prochlorococcus marinus subsp. pastoris (strain CCMP1986 / NIES-2087 / MED4), this protein is NAD(P)H-quinone oxidoreductase subunit J.